Here is a 137-residue protein sequence, read N- to C-terminus: Ribonuclease VapC18 (137 aa).

The 123-residue stretch at cysteine 4–glutamine 126 folds into the PINc domain. Residues aspartate 6 and aspartate 96 each coordinate Mg(2+).

The protein belongs to the PINc/VapC protein family. The cofactor is Mg(2+).

Its function is as follows. Toxic component of a type II toxin-antitoxin (TA) system. An RNase. The cognate antitoxin is VapB18. In Mycobacterium tuberculosis (strain ATCC 25618 / H37Rv), this protein is Ribonuclease VapC18.